Here is a 111-residue protein sequence, read N- to C-terminus: Disintegrin lebein-1-alpha (111 aa).

The signal sequence occupies residues 1 to 20 (MIQVLLVTICLAVFPYQGSS). A propeptide spanning residues 21 to 47 (IILESGNVNDYEIVYPKKVTVLPTGAM) is cleaved from the precursor. The region spanning 47-111 (MNSGNPCCDP…SDCPRNPYKD (65 aa)) is the Disintegrin domain. 4 cysteine pairs are disulfide-bonded: Cys53–Cys76, Cys67–Cys73, Cys72–Cys97, and Cys85–Cys104. The Cell attachment site motif lies at 89–91 (RGD).

This sequence belongs to the disintegrin family. Dimeric disintegrin subfamily. Heterodimer with subunit beta; disulfide-linked. Expressed by the venom gland.

The protein resides in the secreted. Strongly inhibits ADP-induced platelet aggregation on human platelet-rich plasma. Also avidly binds to the laminin-binding beta-1 integrins (alpha-3/beta-1, alpha-6/beta-1, and alpha-7/beta-1) in an RGD-independent manner. This is Disintegrin lebein-1-alpha from Macrovipera lebetinus (Levantine viper).